Reading from the N-terminus, the 578-residue chain is E3 ubiquitin-protein ligase hrd-like protein 1 (578 aa).

Residues 32–52 (GYLALSLCVAFIASASVFTHF) form a helical membrane-spanning segment. N68 carries N-linked (GlcNAc...) asparagine glycosylation. 7 helical membrane-spanning segments follow: residues 76–96 (FGIN…HYIL), 101–121 (LIWV…KLII), 134–154 (VAAR…LSVV), 163–183 (VMPW…QFVT), 202–222 (SFIS…VSRF), 230–250 (PAVL…YILF), and 286–306 (FLSY…SIFF). The RING-type; atypical zinc finger occupies 350–388 (CIVCWELLGTSRRLPCSHQFHDWCLMWWLAQDSSCPTCR). A CUE domain is found at 447 to 489 (QLQSMLETVLEMFPQMSPETILADLRQSGSAQSTIENILEGRM). The N-linked (GlcNAc...) asparagine glycan is linked to N492.

It is found in the membrane. Proposed to have a role in neuroprotection. In Caenorhabditis briggsae, this protein is E3 ubiquitin-protein ligase hrd-like protein 1.